The following is a 202-amino-acid chain: Small ribosomal subunit protein uS4c (202 aa).

One can recognise an S4 RNA-binding domain in the interval 90 to 159 (MRLDNIIFRL…TKNYEFSQTY (70 aa)).

Belongs to the universal ribosomal protein uS4 family. As to quaternary structure, part of the 30S ribosomal subunit. Contacts protein S5. The interaction surface between S4 and S5 is involved in control of translational fidelity.

It is found in the plastid. The protein localises to the chloroplast. One of the primary rRNA binding proteins, it binds directly to 16S rRNA where it nucleates assembly of the body of the 30S subunit. Functionally, with S5 and S12 plays an important role in translational accuracy. In Huperzia lucidula (Shining clubmoss), this protein is Small ribosomal subunit protein uS4c (rps4).